Consider the following 466-residue polypeptide: Ribulose bisphosphate carboxylase large chain (466 aa).

Position 5 is an N6,N6,N6-trimethyllysine (Lys5). 2 residues coordinate substrate: Asn114 and Thr164. The active-site Proton acceptor is Lys166. Residue Lys168 participates in substrate binding. Residues Lys192, Asp194, and Glu195 each coordinate Mg(2+). Lys192 is modified (N6-carboxylysine). The Proton acceptor role is filled by His285. 3 residues coordinate substrate: Arg286, His318, and Ser370.

Belongs to the RuBisCO large chain family. Type I subfamily. In terms of assembly, heterohexadecamer of 8 large chains and 8 small chains; disulfide-linked. The disulfide link is formed within the large subunit homodimers. Requires Mg(2+) as cofactor. In terms of processing, the disulfide bond which can form in the large chain dimeric partners within the hexadecamer appears to be associated with oxidative stress and protein turnover.

It localises to the plastid. It is found in the chloroplast. The enzyme catalyses 2 (2R)-3-phosphoglycerate + 2 H(+) = D-ribulose 1,5-bisphosphate + CO2 + H2O. It carries out the reaction D-ribulose 1,5-bisphosphate + O2 = 2-phosphoglycolate + (2R)-3-phosphoglycerate + 2 H(+). Functionally, ruBisCO catalyzes two reactions: the carboxylation of D-ribulose 1,5-bisphosphate, the primary event in carbon dioxide fixation, as well as the oxidative fragmentation of the pentose substrate in the photorespiration process. Both reactions occur simultaneously and in competition at the same active site. The polypeptide is Ribulose bisphosphate carboxylase large chain (Thespesia populnea (Portia tree)).